A 179-amino-acid chain; its full sequence is uncharacterized protein (179 aa).

Disordered stretches follow at residues 26-103 and 136-179; these read LSAV…SYED and KHKA…SWFN. The span at 34 to 61 shows a compositional bias: basic and acidic residues; the sequence is QQGKNEEQRQHDEWVAERNREIQQEKQR. A compositionally biased stretch (low complexity) spans 63 to 79; sequence ANAQAAANKRAATAAAN. Composition is skewed to basic and acidic residues over residues 82 to 103 and 158 to 179; these read ARQD…SYED and GGRD…SWFN.

This is an uncharacterized protein from Escherichia coli (strain K12).